The primary structure comprises 536 residues: REST corepressor 2 (536 aa).

Positions 1-44 are disordered; the sequence is MERSGSGVLSRSRAKTVTNGNSQHSEEESSDEEHPNDSMIRVGG. Over residues 24-36 the composition is skewed to basic and acidic residues; the sequence is HSEEESSDEEHPN. The ELM2 domain maps to 38 to 123; the sequence is SMIRVGGDYQ…KSLADLANFT (86 aa). Residues 124 to 175 enclose the SANT 1 domain; it reads PFPDEWTVEDKVLFEQAFSFHGKSFHRIQQMLPDKMITSLVKYYYSWKKTRT. The tract at residues 179–264 is disordered; it reads VMDRQARKLL…RARRRPPKGM (86 aa). The segment covering 197-211 has biased composition (acidic residues); sequence NDEIEEGDPGSDSDF. Positions 249–262 are enriched in basic residues; it reads YRHHPLRARRRPPK. Residues 283-315 adopt a coiled-coil conformation; the sequence is VTIRQLDTQLVSLKRQVQKIKQTNSVLRNNLGD. Residues 328-379 form the SANT 2 domain; sequence KINSRWTTEEQLLAVQAVRRYGKDFAAIADVIGNKTVAQVSSFFVSYRRRFN. Positions 389-536 are disordered; it reads AEQEVQGSSG…GLKVESPQSH (148 aa). The segment covering 391–406 has biased composition (polar residues); sequence QEVQGSSGRTVNTELN. A compositionally biased stretch (low complexity) spans 422 to 449; sequence SPPHSDSPLPSSEGSASGNHSSAQSSPP. Residues 450-476 show a composition bias toward pro residues; sequence LTQPPPLLRPAPPSAPPSLLRQPPPLQ.

It belongs to the CoREST family.

The protein resides in the nucleus. In terms of biological role, may act as a component of a corepressor complex that represses transcription. The sequence is that of REST corepressor 2 (rcor2) from Danio rerio (Zebrafish).